A 1257-amino-acid polypeptide reads, in one-letter code: Elongation factor 2 (1257 aa).

Positions 273–402 (LAGLMFGDGC…LQLLLQKFDV (130 aa)) constitute a DOD-type homing endonuclease domain. The tr-type G domain maps to 541 to 782 (VEEHHNFAAE…MVVKHLPDPV (242 aa)). Residues 616–620 (DTPGH) and 670–673 (NKVD) contribute to the GTP site. Diphthamide is present on His-1120. Residues 1237-1250 (ERKGLKPEPPKPED) show a composition bias toward basic and acidic residues. Residues 1237-1257 (ERKGLKPEPPKPEDYIEDYGG) form a disordered region.

It belongs to the TRAFAC class translation factor GTPase superfamily. Classic translation factor GTPase family. EF-G/EF-2 subfamily. This protein undergoes a protein self splicing that involves a post-translational excision of the intervening region (intein) followed by peptide ligation.

It is found in the cytoplasm. Its function is as follows. Catalyzes the GTP-dependent ribosomal translocation step during translation elongation. During this step, the ribosome changes from the pre-translocational (PRE) to the post-translocational (POST) state as the newly formed A-site-bound peptidyl-tRNA and P-site-bound deacylated tRNA move to the P and E sites, respectively. Catalyzes the coordinated movement of the two tRNA molecules, the mRNA and conformational changes in the ribosome. The polypeptide is Elongation factor 2 (Methanopyrus kandleri (strain AV19 / DSM 6324 / JCM 9639 / NBRC 100938)).